The chain runs to 210 residues: Somatotropin-2 (210 aa).

The first 22 residues, 1–22, serve as a signal peptide directing secretion; that stretch reads MGQVFLLMPVLLVSCFLSQGAA. Position 38 (His38) interacts with Zn(2+). A disulfide bond links Cys71 and Cys183. Glu192 lines the Zn(2+) pocket. Cysteines 200 and 208 form a disulfide.

The protein belongs to the somatotropin/prolactin family.

Its subcellular location is the secreted. Its function is as follows. Growth hormone plays an important role in growth control and is involved in the regulation of several anabolic processes. Implicated as an osmoregulatory substance important for seawater adaptation. The protein is Somatotropin-2 (gh2) of Oncorhynchus nerka (Sockeye salmon).